The primary structure comprises 629 residues: 1-deoxy-D-xylulose-5-phosphate synthase (629 aa).

Residues histidine 72 and 113–115 (GHA) each bind thiamine diphosphate. Aspartate 144 lines the Mg(2+) pocket. Thiamine diphosphate contacts are provided by residues 145–146 (GA), asparagine 174, tyrosine 287, and glutamate 370. Asparagine 174 lines the Mg(2+) pocket.

Belongs to the transketolase family. DXPS subfamily. In terms of assembly, homodimer. It depends on Mg(2+) as a cofactor. The cofactor is thiamine diphosphate.

It catalyses the reaction D-glyceraldehyde 3-phosphate + pyruvate + H(+) = 1-deoxy-D-xylulose 5-phosphate + CO2. It participates in metabolic intermediate biosynthesis; 1-deoxy-D-xylulose 5-phosphate biosynthesis; 1-deoxy-D-xylulose 5-phosphate from D-glyceraldehyde 3-phosphate and pyruvate: step 1/1. In terms of biological role, catalyzes the acyloin condensation reaction between C atoms 2 and 3 of pyruvate and glyceraldehyde 3-phosphate to yield 1-deoxy-D-xylulose-5-phosphate (DXP). This is 1-deoxy-D-xylulose-5-phosphate synthase from Prochlorococcus marinus (strain MIT 9312).